Here is a 162-residue protein sequence, read N- to C-terminus: Tripartite terminase subunit 2 (162 aa).

A disordered region spans residues 1–58 (MYGRSNAPGCQPPVRAHPPSSPMTSRLQLAAMEQNASDAALSGMQQARSRQASPKRLR). Over residues 43-52 (GMQQARSRQA) the composition is skewed to polar residues.

The protein belongs to the herpesviridae TRM2 protein family. As to quaternary structure, associates with TRM1 and TRM3 to form the tripartite terminase complex.

It localises to the host nucleus. In terms of biological role, component of the molecular motor that translocates viral genomic DNA in empty capsid during DNA packaging. Forms a tripartite terminase complex together with TRM1 and TRM3 in the host cytoplasm. Once the complex reaches the host nucleus, it interacts with the capsid portal vertex. This portal forms a ring in which genomic DNA is translocated into the capsid. This Equine herpesvirus 1 (strain Ab4p) (EHV-1) protein is Tripartite terminase subunit 2.